Consider the following 544-residue polypeptide: Formate--tetrahydrofolate ligase (544 aa).

T63–S70 is an ATP binding site.

This sequence belongs to the formate--tetrahydrofolate ligase family.

It catalyses the reaction (6S)-5,6,7,8-tetrahydrofolate + formate + ATP = (6R)-10-formyltetrahydrofolate + ADP + phosphate. Its pathway is one-carbon metabolism; tetrahydrofolate interconversion. The protein is Formate--tetrahydrofolate ligase of Fusobacterium nucleatum subsp. nucleatum (strain ATCC 25586 / DSM 15643 / BCRC 10681 / CIP 101130 / JCM 8532 / KCTC 2640 / LMG 13131 / VPI 4355).